The following is a 3712-amino-acid chain: Laminin subunit alpha (3712 aa).

An N-terminal signal peptide occupies residues 1–22; the sequence is MGHGVASIGALLVILAISYCQA. Positions 23–272 constitute a Laminin N-terminal domain; the sequence is ELTPPYFNLA…SIKDISIGGR (250 aa). N-linked (GlcNAc...) asparagine glycosylation is found at N116 and N219. 43 disulfides stabilise this stretch: C273–C282, C275–C296, C298–C307, C310–C330, C333–C342, C335–C367, C370–C379, C382–C400, C403–C414, C405–C421, C423–C432, C435–C445, C448–C460, C450–C468, C470–C479, C482–C492, C495–C507, C497–C514, C516–C525, C528–C538, C541–C553, C543–C560, C562–C571, C574–C584, C587–C599, C589–C605, C607–C616, C619–C629, C632–C644, C634–C650, C652–C661, C664–C674, C677–C691, C679–C700, C702–C711, C714–C729, C732–C746, C734–C753, C755–C764, C767–C782, C785–C797, C787–C804, and C806–C815. Laminin EGF-like domains lie at 273 to 332, 333 to 402, 403 to 447, 448 to 494, 495 to 540, 541 to 586, 587 to 631, 632 to 676, 677 to 731, and 732 to 784; these read CMCN…NCEP, CNCH…VCSP, CQCD…NCRE, CECN…ECKA, CECN…TCSY, CDCD…DCKP, CNCS…DCLP, CHCD…SCED, CNCD…GCEI, and CDCW…GCKD. The N-linked (GlcNAc...) asparagine glycan is linked to N395. The N-linked (GlcNAc...) asparagine glycan is linked to N453. N508 carries N-linked (GlcNAc...) asparagine glycosylation. N588 carries an N-linked (GlcNAc...) asparagine glycan. The N-linked (GlcNAc...) asparagine glycan is linked to N722. Positions 785-815 constitute a Laminin EGF-like 11; truncated domain; it reads CSCDVGGSWQSVCDKISGQCKCHPRITGLAC. Positions 816–1374 are domain IV''; it reads TQPLTTHFFP…TADYNSGALP (559 aa). Residues N897 and N1352 are each glycosylated (N-linked (GlcNAc...) asparagine). 16 disulfide bridges follow: C1375-C1387, C1377-C1394, C1396-C1405, C1408-C1418, C1421-C1429, C1423-C1436, C1438-C1447, C1450-C1463, C1466-C1480, C1468-C1487, C1489-C1498, C1501-C1511, C1514-C1526, C1516-C1533, C1535-C1544, and C1547-C1562. Laminin EGF-like domains lie at 1375–1420, 1421–1465, 1466–1513, and 1514–1564; these read CNCD…DCKP, CKCP…GCEE, CACN…HCEQ, and CSCH…GCTT. N1484 carries N-linked (GlcNAc...) asparagine glycosylation. A Laminin EGF-like 16; first part domain is found at 1565-1574; it reads CFCFGKTSRC. N-linked (GlcNAc...) asparagine glycans are attached at residues N1583 and N1617. A Laminin IV type A domain is found at 1585 to 1775; sequence SLLKHVSITT…GEYQFLAVER (191 aa). Positions 1776–1808 constitute a Laminin EGF-like 16; second part domain; the sequence is CSCPPGYSGHSCEDCAPGYYRDPSGPYGGYCIP. Cystine bridges form between C1778/C1787, C1790/C1806, C1809/C1818, C1811/C1825, C1828/C1837, C1840/C1856, C1859/C1874, C1861/C1885, C1887/C1896, C1899/C1914, C1917/C1931, C1919/C1938, C1941/C1950, C1953/C1967, C1970/C1980, C1972/C1987, C1989/C1998, C2001/C2014, C2017/C2028, C2019/C2035, C2037/C2046, C2049/C2061, C2064/C2076, C2066/C2083, C2085/C2094, and C2097/C2109. Laminin EGF-like domains lie at 1809–1858, 1859–1916, 1917–1969, 1970–2016, 2017–2063, and 2064–2111; these read CECN…DCMI, CACP…VCKP, CECS…NCQS, CDCD…GCRA, CDCG…GCTP, and CNCN…GCQE. N-linked (GlcNAc...) asparagine glycosylation occurs at N1847. An N-linked (GlcNAc...) asparagine glycan is attached at N1943. Residue N2024 is glycosylated (N-linked (GlcNAc...) asparagine). The domain II and I stretch occupies residues 2112 to 2671; the sequence is CNNCHHALLD…EAARQLANSI (560 aa). Residues 2178–2249 are a coiled coil; sequence KKANSELESD…LSKNLEAAAS (72 aa). N2196, N2215, N2267, N2301, and N2323 each carry an N-linked (GlcNAc...) asparagine glycan. Residues 2301-2321 adopt a coiled-coil conformation; the sequence is NKSLNALKNDIGEFSDHLEDL. Residues 2376–2450 adopt a coiled-coil conformation; sequence DLTLNQINQK…QYTDMTASAE (75 aa). N2482, N2524, N2538, N2569, N2699, N2720, N2890, N2938, and N3010 each carry an N-linked (GlcNAc...) asparagine glycan. Positions 2541-2676 form a coiled coil; that stretch reads EHQLKDINKL…LANSIKVGVN (136 aa). Laminin G-like domains are found at residues 2672-2868, 2876-3048, and 3055-3223; these read KVGV…ERDV, VTGL…EEGC, and VVSY…INGC. Cysteines 3022 and 3048 form a disulfide. N-linked (GlcNAc...) asparagine glycosylation is present at N3070. A disulfide bridge links C3196 with C3223. Positions 3244 to 3297 are disordered; it reads NEVESPWSNADTLPPLKPDIESTLPPTTPTTTTTTTTTTTSTTTTSTTTTTTTP. The segment covering 3265–3297 has biased composition (low complexity); sequence STLPPTTPTTTTTTTTTTTSTTTTSTTTTTTTP. 2 Laminin G-like domains span residues 3349 to 3528 and 3534 to 3709; these read GYRF…VVPC and RGLF…QGYC. N-linked (GlcNAc...) asparagine glycosylation is present at N3491. A disulfide bridge connects residues C3505 and C3528. N-linked (GlcNAc...) asparagine glycosylation is present at N3612. Cysteines 3682 and 3709 form a disulfide.

In terms of assembly, laminin is a complex glycoprotein, consisting of three different polypeptide chains (alpha, beta, gamma), which are bound to each other by disulfide bonds into a cross-shaped molecule comprising one long and three short arms with globules at each end. As to expression, newly formed mesoderm and later prominently expressed in hemocytes, which also synthesize collagen IV. Expressed in muscles.

The protein resides in the secreted. The protein localises to the extracellular space. Its subcellular location is the extracellular matrix. It is found in the basement membrane. It localises to the synapse. The protein resides in the cell projection. The protein localises to the axon. Its subcellular location is the cytoplasmic vesicle. It is found in the secretory vesicle. It localises to the synaptic vesicle. Its function is as follows. Binding to cells via a high affinity receptor, laminin is thought to mediate the attachment, migration and organization of cells into tissues during embryonic development by interacting with other extracellular matrix components. Activates presynaptic signaling involving integrin alpha-PS3/beta-nu and Fak to suppress neuromuscular junction (NMJ) growth during larval development and during low crawling activity, but not during higher-crawling conditions. Mediates, together with integrin alpha-PS3/beta-nu, glutamate receptor-modulated NMJ growth. In Drosophila melanogaster (Fruit fly), this protein is Laminin subunit alpha (LanA).